The primary structure comprises 195 residues: Protein Nef (195 aa).

Residue G2 is the site of N-myristoyl glycine; by host attachment. Positions 2–53 (GNIFGRWPGARKAIEDLHNTSSEPVGQASQDLQNKGGLTTNTLGTSADVLEY) are N-terminal; associates with the host plasma membrane. A necessary for MHC-I internalization region spans residues 7–22 (RWPGARKAIEDLHNTS). The acidic stretch occupies residues 59 to 61 (EEE). Positions 65–74 (PVRPAVPMRP) are SH3-binding. Positions 65-74 (PVRPAVPMRP) are SH3-binding; interaction with Src family tyrosine kinases. The PxxP motif lies at 68-71 (PAVP). The segment at 104–120 (AILDTWMYNTQGVFPDW) is mediates dimerization. Positions 144 to 171 (VDPPEDDEKNILLHPACSHGTTDPDGET) are binding to ATP6V1H. The Di-leucine internalization motif; necessary for CD4 internalization motif lies at 155-156 (LL).

It belongs to the lentivirus primate group Nef protein family. In terms of assembly, homodimer.

The protein resides in the host cell membrane. It localises to the host cytoplasm. It is found in the host perinuclear region. Its subcellular location is the virion. The protein localises to the secreted. Functionally, factor of infectivity and pathogenicity, required for optimal virus replication. Alters numerous pathways of T-lymphocyte function and down-regulates immunity surface molecules in order to evade host defense and increase viral infectivity. Alters the functionality of other immunity cells, like dendritic cells, monocytes/macrophages and NK cells. One of the earliest and most abundantly expressed viral proteins. In infected CD4(+) T-lymphocytes, down-regulates the surface MHC-I, mature MHC-II, CD4, CD28 and probably other immunity surface molecules. In consequence infected cells are masked for immune recognition by cytotoxic T-lymphocytes. Decreasing the number of immune receptors also prevents reinfection by more HIV particles (superinfection). Its function is as follows. Bypasses host T-cell signaling by inducing a transcriptional program nearly identical to that of anti-CD3 cell activation. Interaction with TCR-zeta chain up-regulates the Fas ligand (FasL). Increasing surface FasL molecules and decreasing surface MHC-I molecules on infected CD4(+) cells send attacking cytotoxic CD8+ T-lymphocytes into apoptosis. In terms of biological role, plays a role in optimizing the host cell environment for viral replication without causing cell death by apoptosis. Protects the infected cells from apoptosis in order to keep them alive until the next virus generation is ready to strike. This chain is Protein Nef, found in Pan troglodytes (Chimpanzee).